A 384-amino-acid chain; its full sequence is Toluene efflux pump periplasmic linker protein TtgA (384 aa).

A signal peptide spans Met-1–Gly-22. Cys-23 carries the N-palmitoyl cysteine lipid modification. Cys-23 carries S-diacylglycerol cysteine lipidation. The stretch at Leu-115 to Arg-155 forms a coiled coil. The disordered stretch occupies residues Ala-362–Glu-384. Over residues Pro-368–Lys-378 the composition is skewed to low complexity.

The protein belongs to the membrane fusion protein (MFP) (TC 8.A.1) family.

Its subcellular location is the cell inner membrane. Functionally, the periplasmic linker protein component of a constitutive organic solvent efflux system. Involved in export of toluene, styrene, m-xylene, propylbenzene and ethylbenzene. Also exports AMP and the antibiotics carbenicillin, nalidixic acid, chloramphenicol and tetracycline. The polypeptide is Toluene efflux pump periplasmic linker protein TtgA (ttgA) (Pseudomonas putida (strain DOT-T1E)).